Reading from the N-terminus, the 622-residue chain is Carbon monoxide dehydrogenase (622 aa).

[4Fe-4S] cluster-binding residues include Cys40, Cys49, Cys52, Cys57, and Cys68. [Ni-4Fe-5S] cluster is bound by residues His256, Cys334, Cys442, Cys473, and Cys514.

It belongs to the Ni-containing carbon monoxide dehydrogenase family. In terms of assembly, homodimer. The cofactor is [4Fe-4S] cluster. [Ni-4Fe-5S] cluster serves as cofactor.

It catalyses the reaction CO + 2 oxidized [2Fe-2S]-[ferredoxin] + H2O = 2 reduced [2Fe-2S]-[ferredoxin] + CO2 + 2 H(+). Functionally, CODH oxidizes carbon monoxide coupled, via CooF, to the reduction of a hydrogen cation by a hydrogenase (possibly CooH). This Archaeoglobus fulgidus (strain ATCC 49558 / DSM 4304 / JCM 9628 / NBRC 100126 / VC-16) protein is Carbon monoxide dehydrogenase (cooS).